We begin with the raw amino-acid sequence, 400 residues long: Acetate kinase (400 aa).

Residue Asn-10 coordinates Mg(2+). Lys-17 provides a ligand contact to ATP. Arg-91 lines the substrate pocket. The active-site Proton donor/acceptor is the Asp-150. ATP is bound by residues 210-214 (HLGNG), 285-287 (DCR), and 333-337 (GIGEN). Mg(2+) is bound at residue Glu-387.

This sequence belongs to the acetokinase family. In terms of assembly, homodimer. Requires Mg(2+) as cofactor. Mn(2+) serves as cofactor.

Its subcellular location is the cytoplasm. The enzyme catalyses acetate + ATP = acetyl phosphate + ADP. It functions in the pathway metabolic intermediate biosynthesis; acetyl-CoA biosynthesis; acetyl-CoA from acetate: step 1/2. Catalyzes the formation of acetyl phosphate from acetate and ATP. Can also catalyze the reverse reaction. The protein is Acetate kinase of Salmonella typhi.